We begin with the raw amino-acid sequence, 674 residues long: Probable L-type lectin-domain containing receptor kinase I.5 (674 aa).

Positions 1-22 (MSKGLFLIWLISSFHLISFSTS) are cleaved as a signal peptide. Over 23-286 (SKDTSFVFNG…RPRAEHKKVQ (264 aa)) the chain is Extracellular. Residues 25 to 258 (DTSFVFNGFG…YHYLLGWSFS (234 aa)) are legume-lectin like. N-linked (GlcNAc...) asparagine glycans are attached at residues asparagine 124, asparagine 181, asparagine 185, asparagine 204, and asparagine 225. A helical transmembrane segment spans residues 287–307 (FALIIALPVILAIVVMAVLAG). Residues 308 to 674 (VYYHRKKKYA…DHEQPLEFKS (367 aa)) lie on the Cytoplasmic side of the membrane. The 282-residue stretch at 344–625 (FHKDRFLGRG…LPLPDFSPYT (282 aa)) folds into the Protein kinase domain. ATP-binding positions include 350 to 358 (LGRGGFGEV) and lysine 372. The active-site Proton acceptor is the aspartate 468. Residues 649–662 (NWSAPSASSSSANN) show a composition bias toward low complexity. The tract at residues 649 to 674 (NWSAPSASSSSANNSKDHEQPLEFKS) is disordered. Basic and acidic residues predominate over residues 663-674 (SKDHEQPLEFKS).

This sequence in the C-terminal section; belongs to the protein kinase superfamily. Ser/Thr protein kinase family. In the N-terminal section; belongs to the leguminous lectin family.

The protein resides in the cell membrane. It catalyses the reaction L-seryl-[protein] + ATP = O-phospho-L-seryl-[protein] + ADP + H(+). The enzyme catalyses L-threonyl-[protein] + ATP = O-phospho-L-threonyl-[protein] + ADP + H(+). The sequence is that of Probable L-type lectin-domain containing receptor kinase I.5 (LECRK15) from Arabidopsis thaliana (Mouse-ear cress).